Here is a 435-residue protein sequence, read N- to C-terminus: 3-phosphoshikimate 1-carboxyvinyltransferase (435 aa).

Residues Lys-15, Ser-16, and Arg-20 each coordinate 3-phosphoshikimate. Position 15 (Lys-15) interacts with phosphoenolpyruvate. Residues Gly-96 and Arg-124 each coordinate phosphoenolpyruvate. 3-phosphoshikimate-binding residues include Ser-169, Gln-171, Thr-195, Asp-319, and Lys-346. Gln-171 contributes to the phosphoenolpyruvate binding site. The active-site Proton acceptor is Asp-319. Phosphoenolpyruvate contacts are provided by Arg-350 and Arg-394.

Belongs to the EPSP synthase family. Monomer.

It localises to the cytoplasm. The catalysed reaction is 3-phosphoshikimate + phosphoenolpyruvate = 5-O-(1-carboxyvinyl)-3-phosphoshikimate + phosphate. It participates in metabolic intermediate biosynthesis; chorismate biosynthesis; chorismate from D-erythrose 4-phosphate and phosphoenolpyruvate: step 6/7. Functionally, catalyzes the transfer of the enolpyruvyl moiety of phosphoenolpyruvate (PEP) to the 5-hydroxyl of shikimate-3-phosphate (S3P) to produce enolpyruvyl shikimate-3-phosphate and inorganic phosphate. The polypeptide is 3-phosphoshikimate 1-carboxyvinyltransferase (Chloroherpeton thalassium (strain ATCC 35110 / GB-78)).